The chain runs to 710 residues: Methionine--tRNA ligase (710 aa).

Positions 16–26 (PYANGAFHIGH) match the 'HIGH' region motif. Positions 147, 150, 160, and 163 each coordinate Zn(2+). The short motif at 350–354 (KMSKS) is the 'KMSKS' region element. An ATP-binding site is contributed by Lys-353. Residues 604–710 (DFAKIDLRIA…PGAEPGMRVG (107 aa)) enclose the tRNA-binding domain.

It belongs to the class-I aminoacyl-tRNA synthetase family. MetG type 1 subfamily. Homodimer. The cofactor is Zn(2+).

It localises to the cytoplasm. It carries out the reaction tRNA(Met) + L-methionine + ATP = L-methionyl-tRNA(Met) + AMP + diphosphate. Functionally, is required not only for elongation of protein synthesis but also for the initiation of all mRNA translation through initiator tRNA(fMet) aminoacylation. The chain is Methionine--tRNA ligase from Herminiimonas arsenicoxydans.